The following is a 619-amino-acid chain: Cationic amino acid transporter 3 (619 aa).

Topologically, residues 1-36 (MLWQALRRFGQKLVRRRLLELGMGETRLARCLSTLD) are cytoplasmic. A helical transmembrane segment spans residues 37-57 (LVALGVGSTLGAGVYVLAGEV). Residues 58-61 (AKEK) are Extracellular-facing. A helical transmembrane segment spans residues 62 to 82 (AGPSIVICFLVAALSSVLAGL). The Cytoplasmic portion of the chain corresponds to 83–107 (CYAEFGARVPGSGSAYLYSYVTVGE). The helical transmembrane segment at 108 to 128 (LWAFTTGWNLILSYVIGTASV) threads the bilayer. Residues 129-162 (ARAWSSAFDNLIGNHISQTLKGTILLNMPHVLAE) lie on the Extracellular side of the membrane. A helical membrane pass occupies residues 163–183 (YPDFFALALVLLLTGLLVLGA). At 184-191 (NESGLVTK) the chain is on the cytoplasmic side. The helical transmembrane segment at 192 to 212 (VFTGMNLLVLGFVIISGFIKG) threads the bilayer. Topologically, residues 213-244 (ELRNWKLTKEDYCLTMSESNGTCSLDSMGSGG) are extracellular. N-linked (GlcNAc...) asparagine glycosylation is present at N232. The chain crosses the membrane as a helical span at residues 245-265 (FMPFGLEGILRGAATCFYAFV). Topologically, residues 266 to 285 (GFDCIATTGEEAQNPQRSIP) are cytoplasmic. Residues 286–306 (MGIVISLSICFLAYFGVSSAL) form a helical membrane-spanning segment. Residues 307–335 (TLMMPYYKLQPESPLPEAFTYVGWEPARY) are Extracellular-facing. Residues 336-356 (LVAIGSLCALSTSLLGSMFPM) form a helical membrane-spanning segment. Topologically, residues 357 to 382 (PRVIYAMAEDGLLFRVLARVHNGTHT) are cytoplasmic. A helical membrane pass occupies residues 383–403 (PIVATVVSGVIAAFMAFLFEL). Over 404-406 (TDL) the chain is Extracellular. A helical transmembrane segment spans residues 407-427 (VDLMSIGTLLAYSLVSICVLI). Residues 428 to 475 (LRYQPDQEMKNGEEEVELQEERTLEAEKLTVQALFCQVDSIPTLLSGR) lie on the Cytoplasmic side of the membrane. Residues 476 to 496 (IVYVCSSLLAVLLTVLCLVLT) traverse the membrane as a helical segment. The Extracellular portion of the chain corresponds to 497-507 (WWTTPLHSGDP). A helical transmembrane segment spans residues 508 to 528 (VWVTVVVLILGLILGISGVIW). Residues 529 to 540 (RQPQNRTPLHFK) are Cytoplasmic-facing. Residues 541-561 (VPVVPLLPLVSIFVNVYLMMQ) traverse the membrane as a helical segment. The Extracellular portion of the chain corresponds to 562–569 (MTADTWAR). The chain crosses the membrane as a helical span at residues 570 to 590 (FGVWMLIGFAIYFGYGIQHSV). Residues 591–619 (EEVKNHQTLPKTRPQTIDLDLTTSCVHSI) are Cytoplasmic-facing. A Phosphothreonine modification is found at T606. Position 618 is a phosphoserine (S618).

It belongs to the amino acid-polyamine-organocation (APC) superfamily. Cationic amino acid transporter (CAT) (TC 2.A.3.3) family. N-glycosylated. As to expression, highly expressed in brain.

It localises to the cell membrane. It catalyses the reaction L-arginine(in) = L-arginine(out). It carries out the reaction L-lysine(in) = L-lysine(out). The enzyme catalyses L-ornithine(in) = L-ornithine(out). Its activity is regulated as follows. Inhibited by high potassium ions-induced membrane depolarization. In terms of biological role, uniporter that mediates the uptake of cationic L-amino acids such as L-arginine, L-lysine and L-ornithine. The transport is sodium ions- and pH-independent, moderately trans-stimulated and is mediated by passive diffusion. This is Cationic amino acid transporter 3 from Rattus norvegicus (Rat).